A 38-amino-acid chain; its full sequence is Photosystem II reaction center protein Y (38 aa).

The chain crosses the membrane as a helical span at residues 5–23 (VVVVLAPVIIAGSWAIFNI).

This sequence belongs to the PsbY family. As to quaternary structure, PSII is composed of 1 copy each of membrane proteins PsbA, PsbB, PsbC, PsbD, PsbE, PsbF, PsbH, PsbI, PsbJ, PsbK, PsbL, PsbM, PsbT, PsbX, PsbY, PsbZ, Psb30/Ycf12, peripheral proteins PsbO, CyanoQ (PsbQ), PsbU, PsbV and a large number of cofactors. It forms dimeric complexes.

Its subcellular location is the cellular thylakoid membrane. Functionally, loosely associated component of the core of photosystem II (PSII), it is not always seen in crystals. PSII is a light-driven water plastoquinone oxidoreductase, using light energy to abstract electrons from H(2)O, generating a proton gradient subsequently used for ATP formation. This Picosynechococcus sp. (strain ATCC 27264 / PCC 7002 / PR-6) (Agmenellum quadruplicatum) protein is Photosystem II reaction center protein Y.